A 1019-amino-acid polypeptide reads, in one-letter code: Insulin-degrading enzyme (1019 aa).

Residue H108 coordinates Zn(2+). E111 functions as the Proton acceptor in the catalytic mechanism. Zn(2+)-binding residues include H112 and E189. An N6-succinyllysine modification is found at K192. A substrate-binding site is contributed by 359–363 (LVGGQ). R429 serves as a coordination point for ATP. K697 is subject to N6-succinyllysine. The SlyX motif signature appears at 853–858 (EKPPHY). Residue 895–901 (DKPKKLS) participates in ATP binding.

Belongs to the peptidase M16 family. In terms of assembly, homodimer. Can also form homotetramers. Requires Zn(2+) as cofactor.

Its subcellular location is the cytoplasm. It is found in the cytosol. It localises to the cell membrane. The protein localises to the secreted. It catalyses the reaction Degradation of insulin, glucagon and other polypeptides. No action on proteins.. Its activity is regulated as follows. Activated by ATP, other nucleotide triphosphates and small peptides. Inhibited by bacitracin. Functionally, plays a role in the cellular breakdown of insulin, APP peptides, IAPP peptides, natriuretic peptides, glucagon, bradykinin, kallidin, and other peptides, and thereby plays a role in intercellular peptide signaling. Substrate binding induces important conformation changes, making it possible to bind and degrade larger substrates, such as insulin. Contributes to the regulation of peptide hormone signaling cascades and regulation of blood glucose homeostasis via its role in the degradation of insulin, glucagon and IAPP. Plays a role in the degradation and clearance of APP-derived amyloidogenic peptides that are secreted by neurons and microglia. Degrades the natriuretic peptides ANP, BNP and CNP, inactivating their ability to raise intracellular cGMP. Also degrades an aberrant frameshifted 40-residue form of NPPA (fsNPPA) which is associated with familial atrial fibrillation in heterozygous patients. Involved in antigen processing. Produces both the N terminus and the C terminus of MAGEA3-derived antigenic peptide (EVDPIGHLY) that is presented to cytotoxic T lymphocytes by MHC class I. This chain is Insulin-degrading enzyme (IDE), found in Bos taurus (Bovine).